We begin with the raw amino-acid sequence, 177 residues long: T-cell receptor beta chain C region (177 aa).

A c region region spans residues 1–150; that stretch reads EDLANVSAPQ…GVLSATVLYE (150 aa). Asn5 and Asn22 each carry an N-linked (GlcNAc...) asparagine glycan. Cys31 and Cys96 form a disulfide bridge. A helical transmembrane segment spans residues 146 to 168; sequence TVLYEILLGKATLYAVLVSALVL. Residues 169–177 lie on the Cytoplasmic side of the membrane; that stretch reads MAMVKRKDS.

It is found in the membrane. The protein is T-cell receptor beta chain C region of Oryctolagus cuniculus (Rabbit).